The chain runs to 469 residues: Flap endonuclease 1-B (469 aa).

The tract at residues 1-103 is N-domain; the sequence is MGIKGLTGLL…GVLSKRLERR (103 aa). Residue Asp-32 coordinates Mg(2+). Residues Arg-45 and Arg-69 each coordinate DNA. Positions 85, 157, 159, 183, and 185 each coordinate Mg(2+). Positions 121–257 are I-domain; sequence DVDRFSRRTV…KSALKLIREY (137 aa). Residue Glu-157 coordinates DNA. 2 residues coordinate DNA: Gly-235 and Asp-237. Asp-237 lines the Mg(2+) pocket. A disordered region spans residues 274–354; the sequence is QKAAQAAVES…GGMQIPEEWP (81 aa). Composition is skewed to acidic residues over residues 282–295 and 302–317; these read ESDEESEHEEEDEP and EMPDPVEEDQDGEEEA. Over residues 326–342 the composition is skewed to basic residues; that stretch reads PKKKKASSKTKEKRKGK. The segment at 412 to 420 is interaction with PCNA; that stretch reads QQGRLDGFF. The interval 424 to 469 is disordered; sequence PKEKAAAPAPVGKAKGKGKIDAKAKGTKRKVDEKAESSAGKKPRKK. Residues 441-459 are compositionally biased toward basic and acidic residues; that stretch reads GKIDAKAKGTKRKVDEKAE.

Belongs to the XPG/RAD2 endonuclease family. FEN1 subfamily. In terms of assembly, interacts with PCNA. Three molecules of FEN1 bind to one PCNA trimer with each molecule binding to one PCNA monomer. PCNA stimulates the nuclease activity without altering cleavage specificity. Mg(2+) serves as cofactor. Phosphorylated. Phosphorylation upon DNA damage induces relocalization to the nuclear plasma.

The protein localises to the nucleus. It localises to the nucleolus. It is found in the nucleoplasm. The protein resides in the mitochondrion. Structure-specific nuclease with 5'-flap endonuclease and 5'-3' exonuclease activities involved in DNA replication and repair. During DNA replication, cleaves the 5'-overhanging flap structure that is generated by displacement synthesis when DNA polymerase encounters the 5'-end of a downstream Okazaki fragment. It enters the flap from the 5'-end and then tracks to cleave the flap base, leaving a nick for ligation. Also involved in the long patch base excision repair (LP-BER) pathway, by cleaving within the apurinic/apyrimidinic (AP) site-terminated flap. Acts as a genome stabilization factor that prevents flaps from equilibrating into structures that lead to duplications and deletions. Also possesses 5'-3' exonuclease activity on nicked or gapped double-stranded DNA, and exhibits RNase H activity. Also involved in replication and repair of rDNA and in repairing mitochondrial DNA. The chain is Flap endonuclease 1-B from Laccaria bicolor (strain S238N-H82 / ATCC MYA-4686) (Bicoloured deceiver).